The sequence spans 533 residues: Tyrosine ammonia-lyase (533 aa).

Tyr57 serves as the catalytic Proton donor/acceptor. His87 provides a ligand contact to substrate. Positions 146–148 (ASG) form a cross-link, 5-imidazolinone (Ala-Gly). Ser147 is subject to 2,3-didehydroalanine (Ser). Substrate contacts are provided by Asn200 and Arg305.

It belongs to the TAL/TAM family. As to quaternary structure, homotetramer; dimer of dimers. Contains an active site 4-methylidene-imidazol-5-one (MIO), which is formed autocatalytically by cyclization and dehydration of residues Ala-Ser-Gly.

The enzyme catalyses L-tyrosine = (E)-4-coumarate + NH4(+). It catalyses the reaction L-tyrosine = 3-amino-3-(4-hydroxyphenyl)propanoate. Functionally, has ammonia-lyase and, to a lesser extent, aminomutase activity. Catalyzes the rearrangement of L-tyrosine to R-beta-tyrosine and S-beta-tyrosine. Does not accept L-histidine or L-phenylalanine as substrates. This chain is Tyrosine ammonia-lyase, found in Cupriavidus metallidurans (strain ATCC 43123 / DSM 2839 / NBRC 102507 / CH34) (Ralstonia metallidurans).